A 438-amino-acid chain; its full sequence is MTRTLLKIYTLFILLLCRQRDANRKLLVFLIDGFRHDYMDDLHNLPGFREIVENGVKVDYLTPDFPSLSYPNYYSLMTGRHCEVHQMTGNYMWDTDTQKEFLIGTNPDSRLPMWWDGSEPLWVTMQKLGKKVYMYYWPGCEVTILGVRPTFCEEYVYNPSEKNLTDSMENALNALKSSKADMAGIYYEKIDVEGHHFGPRSPEIQRAIRSLDQAFQILNQKIREKNMRDTINVVLFSDHGMTQLKWMEKIIELDNYINMSHIIKMMDRGPVVSLWPKQDKFEEIYQNLSTADNMNVYKKHEIPDRFHYKNGQFVSTLTLVAEPGWFITENKAKLPFWNNGTEAAGGWQHGWHGYDNEFVDMRGSFLAQGPDFKSNYRAGPIRTVDVYNVLCKTLGMNPLPNNGSWSRVECMMRSSAATAGASLISCCFLLLLTLTGVC.

The N-terminal stretch at 1–22 (MTRTLLKIYTLFILLLCRQRDA) is a signal peptide. The substrate site is built by D32, S69, and N90. Zn(2+)-binding residues include D32 and S69. The Nucleophile role is filled by S69. The residue at position 69 (S69) is a Phosphoserine. A disulfide bridge links C140 with C152. A coiled-coil region spans residues 162–226 (KNLTDSMENA…ILNQKIREKN (65 aa)). N163 carries an N-linked (GlcNAc...) asparagine glycan. Residue D191 coordinates substrate. 4 residues coordinate Zn(2+): D191, H195, D238, and H239. H239 is a binding site for substrate. Residues N258, N287, and N339 are each glycosylated (N-linked (GlcNAc...) asparagine). H352 contacts substrate. H352 is a Zn(2+) binding site. N-linked (GlcNAc...) asparagine glycosylation is present at N402. S415 carries GPI-anchor amidated serine lipidation. Positions 416 to 438 (AATAGASLISCCFLLLLTLTGVC) are cleaved as a propeptide — removed in mature form.

It belongs to the nucleotide pyrophosphatase/phosphodiesterase family. Zn(2+) serves as cofactor.

Its subcellular location is the cell membrane. It carries out the reaction sn-glycerol 3-phosphocholine + H2O = phosphocholine + glycerol + H(+). The catalysed reaction is a 1-acyl-sn-glycero-3-phosphocholine + H2O = a 1-acyl-sn-glycerol + phosphocholine + H(+). It catalyses the reaction a 1-O-alkyl-sn-glycero-3-phosphocholine + H2O = a 1-O-alkyl-sn-glycerol + phosphocholine + H(+). The enzyme catalyses 1-dodecanoyl-sn-glycero-3-phosphocholine + H2O = 1-dodecanoyl-sn-glycerol + phosphocholine + H(+). It carries out the reaction 1-hexadecanoyl-sn-glycero-3-phosphocholine + H2O = 1-hexadecanoyl-sn-glycerol + phosphocholine + H(+). The catalysed reaction is 1-(5Z,8Z,11Z,14Z-eicosatetraenoyl)-sn-glycero-3-phosphocholine + H2O = 1-(5Z,8Z,11Z,14Z-eicosatetraenoyl)-sn-glycerol + phosphocholine + H(+). It catalyses the reaction 1-tetradecanoyl-sn-glycero-3-phosphocholine + H2O = 1-tetradecanoyl-sn-glycerol + phosphocholine + H(+). The enzyme catalyses sphing-4-enine-phosphocholine + H2O = sphing-4-enine + phosphocholine + H(+). It carries out the reaction 1-(9Z-octadecenoyl)-sn-glycero-3-phosphocholine + H2O = 1-(9Z-octadecenoyl)-sn-glycerol + phosphocholine + H(+). The catalysed reaction is 1-(9Z,12Z)-octadecadienoyl-sn-glycero-3-phosphocholine + H2O = 1-(9Z,12Z-octadecadienoyl)-sn-glycerol + phosphocholine + H(+). It catalyses the reaction glycero-2-phosphocholine + H2O = phosphocholine + glycerol + H(+). In terms of biological role, choline-specific glycerophosphodiesterase that hydrolyzes glycerophosphocholine (GPC) and lysophosphatidylcholine (LPC) and contributes to supplying choline to the cells. Has a preference for LPC with short (12:0 and 14:0) or polyunsaturated (18:2 and 20:4) fatty acids. In vitro, hydrolyzes only choline-containing lysophospholipids, such as sphingosylphosphorylcholine (SPC), platelet-activating factor (PAF) and lysoPAF, but not other lysophospholipids. In Danio rerio (Zebrafish), this protein is Glycerophosphocholine cholinephosphodiesterase ENPP6.